A 535-amino-acid polypeptide reads, in one-letter code: MQLHISPSLRHVTVVTGKGLREFIKVKVGSRRFSYQMVFYSLLFFTFLLRFVFVLSTVDTIDGDPSPCSSLACLGKRLKPKLLGRRVDSGNVPEAMYQVLEQPLSEQELKGRSDIPQTLQDFMSEVKRSKSDAREFAQKLKEMVTLMEQRTRTAKIQEYLYRHVASSSIPKQLHCLALKLANEHSINAAARLQLPEAELVPMLVDNNYFHFVLASDNILAASVVAKSLVQNALRPHKIVLHIITDRKTYFPMQAWFSLHPLSPAIIEVKALHHFDWLSKGKVPVLEAMEKDQRVRSQFRGGSSVIVANNKENPVVVAAKLQALSPKYNSLMNHIRIHLPELFPSLNKVVFLDDDIVIQTDLSPLWDIDMNGKVNGAVETCRGEDKFVMSKKFKSYLNFSNPTIAKNFNPEECAWAYGMNVFDLAAWRRTNISSTYYHWLDENLKSDLSLWQLGTLPPGLIAFHGHVQTIDPFWHMLGLGYQETTSYADAESAAVVHFNGRAKPWLDIAFPHLRPLWAKYLDSSDRFIKSCHIRAS.

Over Met-1–Met-37 the chain is Cytoplasmic. The chain crosses the membrane as a helical; Signal-anchor for type II membrane protein span at residues Val-38 to Val-58. Residues Asp-59–Ser-535 are Lumenal-facing. N-linked (GlcNAc...) asparagine glycosylation is found at Asn-397 and Asn-430.

The protein belongs to the glycosyltransferase 8 family. As to expression, highly expressed in stems. Detected in roots, inflorescences, siliques, and leaves. Expressed in cells undergoing secondary wall thickening, including interfascicular fibers and primary and secondary xylem.

Its subcellular location is the golgi apparatus membrane. Its pathway is glycan metabolism; pectin biosynthesis. Its function is as follows. Involved in pectin assembly and/or distribution, and in the synthesis of secondary wall glucuronoxylan. Probably involved in the synthesis of the glycosyl sequence at the glucuronoxylan reducing end. May be involved in synthesis of a complex glycan primer for xylan synthesis. This chain is Probable galacturonosyltransferase 12 (GAUT12), found in Arabidopsis thaliana (Mouse-ear cress).